A 62-amino-acid chain; its full sequence is Short neurotoxin C (62 aa).

A compositionally biased stretch (polar residues) spans 1-16 (RRCFNQQSSQPQTNKS). Positions 1–21 (RRCFNQQSSQPQTNKSCPPGE) are disordered. 4 cysteine pairs are disulfide-bonded: C3/C24, C17/C41, C43/C54, and C55/C60.

It belongs to the three-finger toxin family. Short-chain subfamily. Type I alpha-neurotoxin sub-subfamily. As to expression, expressed by the venom gland.

It is found in the secreted. In terms of biological role, binds to muscle nicotinic acetylcholine receptor (nAChR) and inhibit acetylcholine from binding to the receptor, thereby impairing neuromuscular transmission. In Laticauda crockeri (Crocker's sea snake), this protein is Short neurotoxin C.